The primary structure comprises 500 residues: FAD-linked oxidoreductase srdI (500 aa).

Residues M1–A20 form the signal peptide. N-linked (GlcNAc...) asparagine glycosylation is present at N47. Positions Y69–S241 constitute an FAD-binding PCMH-type domain. N-linked (GlcNAc...) asparagine glycans are attached at residues N257 and N282.

It belongs to the oxygen-dependent FAD-linked oxidoreductase family. FAD is required as a cofactor.

Functionally, FAD-linked oxidoreductase; part of the gene cluster that mediates the biosynthesis of sordarial, a salicylic aldehyde structurally related to the phytotoxin pyriculol. The most interesting aspect of this pathway is formation of an aromatic product from the highly reducing polyketide synthase srdA. SrdA synthesizes a reduced polyketide chain from one molecule of acetyl-CoA and five molecules of malonyl-CoA. The polyketide chain is then reductively released as an aldehyde. The oxidoreductases srdC, srdD and srdE then oxidize one of the hydroxy groups to facilitate the intramolecular aldol condensation, followed by dehydration to yield a salicylic aldehyde. This aldehyde can undergo facile reduction by endogenous reductases to yield the alcohol 1-hydroxy-2-hydroxymethyl-3-pent-1,3-dienylbenzene. The flavin-dependent srdI counteract against the propensity of the aldehydes to be reduced under physiological conditions and is responsible for reoxidizing 1-hydroxy-2-hydroxymethyl-3-pent-1,3-dienylbenzene back to the salicylic aldehyde. This salicylic aldehyde is then selectively epoxidized by the cupin-domain-containing oxidoreductase srdB to yield the epoxide, which can be hydrolyzed stereoselectively by the hydrolase srdG to give the final product sordarial. This is FAD-linked oxidoreductase srdI from Neurospora crassa (strain ATCC 24698 / 74-OR23-1A / CBS 708.71 / DSM 1257 / FGSC 987).